The sequence spans 219 residues: Sporamin A (219 aa).

The first 23 residues, 1 to 23, serve as a signal peptide directing secretion; the sequence is MKALTLALFLALSLYLLPNPAHS.

The protein belongs to the protease inhibitor I3 (leguminous Kunitz-type inhibitor) family. As to expression, accumulates specifically in tuberous roots and tubers upon tuberization. Sporamin accounts 60 to 80% of the total soluble protein of the organ.

The protein resides in the vacuole. Its function is as follows. Major tuberous root protein. This Ipomoea batatas (Sweet potato) protein is Sporamin A (GSPO-A1).